The chain runs to 451 residues: Tubulin beta-1 chain (451 aa).

Positions 1–4 match the MREI motif motif; that stretch reads MREI. Residues Q11, E69, S138, G142, T143, and G144 each contribute to the GTP site. E69 provides a ligand contact to Mg(2+). S172 bears the Phosphoserine; by CDK1 mark. GTP is bound by residues N204 and N226. The interval 432-451 is disordered; it reads LEEDEEVTEEAEMEPEDKGH. A compositionally biased stretch (acidic residues) spans 433-451; sequence EEDEEVTEEAEMEPEDKGH. At E440 the chain carries 5-glutamyl polyglutamate.

The protein belongs to the tubulin family. Dimer of alpha and beta chains. A typical microtubule is a hollow water-filled tube with an outer diameter of 25 nm and an inner diameter of 15 nM. Alpha-beta heterodimers associate head-to-tail to form protofilaments running lengthwise along the microtubule wall with the beta-tubulin subunit facing the microtubule plus end conferring a structural polarity. Microtubules usually have 13 protofilaments but different protofilament numbers can be found in some organisms and specialized cells. Interacts with RANBP10. It depends on Mg(2+) as a cofactor. In terms of processing, some glutamate residues at the C-terminus are polyglutamylated, resulting in polyglutamate chains on the gamma-carboxyl group. Polyglutamylation plays a key role in microtubule severing by spastin (SPAST). SPAST preferentially recognizes and acts on microtubules decorated with short polyglutamate tails: severing activity by SPAST increases as the number of glutamates per tubulin rises from one to eight, but decreases beyond this glutamylation threshold. Glutamylation is also involved in cilia motility. Some glutamate residues at the C-terminus are monoglycylated but not polyglycylated due to the absence of functional TTLL10 in human. Monoglycylation is mainly limited to tubulin incorporated into cilia and flagella axonemes, which is required for their stability and maintenance. Flagella glycylation controls sperm motility. Both polyglutamylation and monoglycylation can coexist on the same protein on adjacent residues, and lowering glycylation levels increases polyglutamylation, and reciprocally. Post-translationally, phosphorylated on Ser-172 by CDK1 during the cell cycle, from metaphase to telophase, but not in interphase. This phosphorylation inhibits tubulin incorporation into microtubules. In terms of tissue distribution, hematopoietic cell-specific. Major isotype in leukocytes, where it represents 50% of all beta-tubulins.

The protein localises to the cytoplasm. The protein resides in the cytoskeleton. Tubulin is the major constituent of microtubules, a cylinder consisting of laterally associated linear protofilaments composed of alpha- and beta-tubulin heterodimers. Microtubules grow by the addition of GTP-tubulin dimers to the microtubule end, where a stabilizing cap forms. Below the cap, tubulin dimers are in GDP-bound state, owing to GTPase activity of alpha-tubulin. The chain is Tubulin beta-1 chain (TUBB1) from Homo sapiens (Human).